The following is a 307-amino-acid chain: MNEIAEVLPESMKNALSEIPEQQWLEIEEVRIRINRPVELIRRGQPVYLSYAGTAEDAHLILSRLSNYSMYTLEEELKKGYVTIRGGHRVGLAGRVITENGGVKGLRDIASFNIRIARQKLGIAEPLLPYLYQNSWLNTLIIGPPQTGKTTLLRDLARLSSTGKKNMLPVKTGIVDERSEIAGCLRGIPQHQFGQRIDVLDACPKAEGLMMMIRSMSPEVMIVDEIGRMEDTDALLEALHAGVSVIVSAHGWSISDLMKRPSLKRLWEERAFDRYLELSRAKGPGTVSQIYDKDGNVLSRTTGVKTC.

143–150 (GPPQTGKT) lines the ATP pocket.

This is Stage III sporulation protein AA (spoIIIAA) from Bacillus subtilis (strain 168).